The primary structure comprises 283 residues: 9,11-endoperoxide prostaglandin H2 reductase (283 aa).

NADP(+) is bound by residues 23-24 (VW) and D48. Y53 acts as the Proton donor in catalysis. H111 contributes to the substrate binding site. Residues 140–141 (SN), Q162, 188–193 (WSPLGS), 234–236 (KST), and 240–244 (RIQEN) each bind NADP(+). The tract at residues 264-283 (NEDKRIGGDPDNFFPGGEEA) is disordered.

This sequence belongs to the aldo/keto reductase family. Monomer.

It is found in the cytoplasm. It catalyses the reaction prostaglandin F2alpha + NADP(+) = prostaglandin H2 + NADPH + H(+). It functions in the pathway lipid metabolism; prostaglandin biosynthesis. Functionally, catalyzes the NADP-dependent formation of prostaglandin F2-alpha from prostaglandin H2. Also has aldo/ketoreductase activity towards the synthetic substrates 9,10-phenanthrenequinone and p-nitrobenzaldehyde. This Trypanosoma cruzi (strain CL Brener) protein is 9,11-endoperoxide prostaglandin H2 reductase.